Reading from the N-terminus, the 207-residue chain is A disintegrin and metalloproteinase with thrombospondin motifs 5 (207 aa).

Residues 1–74 (HAAFTVAHEI…GHGNCLLDLP (74 aa)) form the Peptidase M12B domain. Residue H8 coordinates Zn(2+). Residue E9 is part of the active site. Residues H12 and H18 each contribute to the Zn(2+) site. 5 disulfides stabilise this stretch: C24/C53, C95/C117, C106/C127, C112/C146, and C140/C151. Positions 83–164 (ELPGQTYDAS…TKKKYYSTSS (82 aa)) constitute a Disintegrin domain. N-linked (GlcNAc...) asparagine glycosylation occurs at N96. One can recognise a TSP type-1 domain in the interval 165-205 (HGNWGSWGSWGQCSRSCGGGVQFAYRHCNNPAPKNNGRYCT). W168 and W171 each carry a C-linked (Man) tryptophan glycan. S180 carries O-linked (Fuc...) serine glycosylation.

Zn(2+) is required as a cofactor. The precursor is cleaved by furin and PCSK7 outside of the cell. In terms of processing, glycosylated. Can be O-fucosylated by POFUT2 on a serine or a threonine residue found within the consensus sequence C1-X(2)-(S/T)-C2-G of the TSP type-1 repeat domains where C1 and C2 are the first and second cysteine residue of the repeat, respectively. Fucosylated repeats can then be further glycosylated by the addition of a beta-1,3-glucose residue by the glucosyltransferase, B3GALTL. Fucosylation mediates the efficient secretion of ADAMTS family members. Can also be C-glycosylated with one or two mannose molecules on tryptophan residues within the consensus sequence W-X-X-W of the TPRs, and N-glycosylated. These other glycosylations can also facilitate secretion.

The protein resides in the secreted. The protein localises to the extracellular space. It localises to the extracellular matrix. Functionally, metalloproteinase that plays an important role in connective tissue organization, development, inflammation and cell migration. Extracellular matrix (ECM) degrading enzyme that shows proteolytic activity toward the hyalectan group of chondroitin sulfate proteoglycans (CSPGs) including ACAN, VCAN, BCAN and NCAN. Cleavage within the hyalectans occurs at Glu-Xaa recognition motifs. Plays a role in embryonic development, including limb and cardiac morphogenesis, and skeletal muscle development through its VCAN remodeling properties. Cleaves VCAN in the pericellular matrix surrounding myoblasts, facilitating myoblast contact and fusion which is required for skeletal muscle development and regeneration. Participates in the development of brown adipose tissue and browning of white adipose tissue. Plays an important role for T-lymphocyte migration from draining lymph nodes following viral infection. This is A disintegrin and metalloproteinase with thrombospondin motifs 5 (ADAMTS5) from Bos taurus (Bovine).